The primary structure comprises 309 residues: Porphobilinogen deaminase (309 aa).

Residue C242 is modified to S-(dipyrrolylmethanemethyl)cysteine.

It belongs to the HMBS family. As to quaternary structure, monomer. Requires dipyrromethane as cofactor.

It catalyses the reaction 4 porphobilinogen + H2O = hydroxymethylbilane + 4 NH4(+). The protein operates within porphyrin-containing compound metabolism; protoporphyrin-IX biosynthesis; coproporphyrinogen-III from 5-aminolevulinate: step 2/4. Tetrapolymerization of the monopyrrole PBG into the hydroxymethylbilane pre-uroporphyrinogen in several discrete steps. In Shewanella sediminis (strain HAW-EB3), this protein is Porphobilinogen deaminase.